Here is an 887-residue protein sequence, read N- to C-terminus: Alanine--tRNA ligase (887 aa).

Residues H564, H568, C676, and H680 each coordinate Zn(2+). A disordered region spans residues 854 to 873; sequence GQGGGGRPDMAQSGGPKGNK.

This sequence belongs to the class-II aminoacyl-tRNA synthetase family. It depends on Zn(2+) as a cofactor.

It localises to the cytoplasm. The catalysed reaction is tRNA(Ala) + L-alanine + ATP = L-alanyl-tRNA(Ala) + AMP + diphosphate. Functionally, catalyzes the attachment of alanine to tRNA(Ala) in a two-step reaction: alanine is first activated by ATP to form Ala-AMP and then transferred to the acceptor end of tRNA(Ala). Also edits incorrectly charged Ser-tRNA(Ala) and Gly-tRNA(Ala) via its editing domain. The sequence is that of Alanine--tRNA ligase from Bartonella henselae (strain ATCC 49882 / DSM 28221 / CCUG 30454 / Houston 1) (Rochalimaea henselae).